Reading from the N-terminus, the 174-residue chain is uncharacterized protein (174 aa).

To E.coli HemX C-terminal region.

This is an uncharacterized protein from Haemophilus influenzae (strain ATCC 51907 / DSM 11121 / KW20 / Rd).